The primary structure comprises 149 residues: Arginine repressor (149 aa).

Belongs to the ArgR family.

Its subcellular location is the cytoplasm. It participates in amino-acid biosynthesis; L-arginine biosynthesis [regulation]. Its function is as follows. Regulates arginine biosynthesis genes. This Alkaliphilus oremlandii (strain OhILAs) (Clostridium oremlandii (strain OhILAs)) protein is Arginine repressor.